Reading from the N-terminus, the 447-residue chain is Cobyrinate a,c-diamide synthase (447 aa).

The GATase cobBQ-type domain occupies 252–439; the sequence is KIAVAFDESF…AHQHCIGNPY (188 aa). Residue cysteine 331 is the Nucleophile of the active site.

It belongs to the CobB/CbiA family. It depends on Mg(2+) as a cofactor.

The catalysed reaction is cob(II)yrinate + 2 L-glutamine + 2 ATP + 2 H2O = cob(II)yrinate a,c diamide + 2 L-glutamate + 2 ADP + 2 phosphate + 2 H(+). The enzyme catalyses Ni-sirohydrochlorin + 2 L-glutamine + 2 ATP + 2 H2O = Ni-sirohydrochlorin a,c-diamide + 2 L-glutamate + 2 ADP + 2 phosphate + 2 H(+). The protein operates within cofactor biosynthesis; adenosylcobalamin biosynthesis; cob(II)yrinate a,c-diamide from sirohydrochlorin (anaerobic route): step 10/10. In terms of biological role, catalyzes the ATP-dependent amidation of the two carboxylate groups at positions a and c of cobyrinate, using either L-glutamine or ammonia as the nitrogen source. Involved in the biosynthesis of the unique nickel-containing tetrapyrrole coenzyme F430, the prosthetic group of methyl-coenzyme M reductase (MCR), which plays a key role in methanogenesis and anaerobic methane oxidation. Catalyzes the ATP-dependent amidation of the two carboxylate groups at positions a and c of Ni-sirohydrochlorin, using L-glutamine or ammonia as the nitrogen source. The chain is Cobyrinate a,c-diamide synthase from Methanococcus maripaludis (strain C7 / ATCC BAA-1331).